The following is a 203-amino-acid chain: Glycerol-3-phosphate acyltransferase 1 (203 aa).

6 helical membrane-spanning segments follow: residues 2-22 (LNFF…SHII), 52-72 (GFPA…FFVW), 82-102 (VIAF…FLKF), 117-137 (VLTK…FSIL), 150-168 (EDAF…YTMW), and 170-190 (VFNG…IVFY).

The protein belongs to the PlsY family. Probably interacts with PlsX.

The protein localises to the cell inner membrane. It catalyses the reaction an acyl phosphate + sn-glycerol 3-phosphate = a 1-acyl-sn-glycero-3-phosphate + phosphate. It functions in the pathway lipid metabolism; phospholipid metabolism. Its function is as follows. Catalyzes the transfer of an acyl group from acyl-phosphate (acyl-PO(4)) to glycerol-3-phosphate (G3P) to form lysophosphatidic acid (LPA). This enzyme utilizes acyl-phosphate as fatty acyl donor, but not acyl-CoA or acyl-ACP. This chain is Glycerol-3-phosphate acyltransferase 1, found in Thermotoga maritima (strain ATCC 43589 / DSM 3109 / JCM 10099 / NBRC 100826 / MSB8).